We begin with the raw amino-acid sequence, 457 residues long: ERV-H1 provirus ancestral Env polyprotein (457 aa).

An N-terminal signal peptide occupies residues 1-35 (MIFAGKAPSNTSTLMKFYSLILYSLLFSFPFLCHP). 2 N-linked (GlcNAc...) asparagine glycosylation sites follow: Asn10 and Asn47. The CXXC motif lies at 64–67 (CWLC). Asn197, Asn222, Asn265, Asn283, Asn352, and Asn370 each carry an N-linked (GlcNAc...) asparagine glycan. Residues 388-408 (VIPLIPLMFGLGLSASTIALS) are fusion peptide.

Belongs to the gamma type-C retroviral envelope protein family. HERV class-I H env subfamily. The surface (SU) and transmembrane (TM) proteins form a heterodimer. SU and TM are attached by noncovalent interactions or by a labile interchain disulfide bond. Specific enzymatic cleavages in vivo yield the mature SU and TM proteins. Post-translationally, the CXXC motif is highly conserved across a broad range of retroviral envelope proteins. It is thought to participate in the formation of a labile disulfide bond possibly with the CX6CC motif present in the transmembrane protein.

It is found in the virion. In terms of biological role, retroviral envelope proteins mediate receptor recognition and membrane fusion during early infection. Endogenous envelope proteins may have kept, lost or modified their original function during evolution. Functionally, SU mediates receptor recognition. Its function is as follows. TM anchors the envelope heterodimer to the viral membrane through one transmembrane domain. The other hydrophobic domain, called fusion peptide, mediates fusion of the viral membrane with the target cell membrane. In Pan troglodytes (Chimpanzee), this protein is ERV-H1 provirus ancestral Env polyprotein.